A 1486-amino-acid polypeptide reads, in one-letter code: Chromosome partition protein MukB (1486 aa).

34–41 serves as a coordination point for ATP; it reads GGNGAGKS. Coiled-coil stretches lie at residues 326-418, 444-480, and 509-603; these read LEAD…QYNQ, LETFQAKELEATEKMLSLEQKMSMAQTAHSQFEQAYQ, and RHLA…RAPV. The interval 666–783 is flexible hinge; sequence PGGSEDQRLN…EVPLFGRAAR (118 aa). Coiled coils occupy residues 835–923, 977–1115, and 1209–1266; these read EAEI…AKLE, EMLS…TAKA, and VEAI…QNVS.

Belongs to the SMC family. MukB subfamily. In terms of assembly, homodimerization via its hinge domain. Binds to DNA via its C-terminal region. Interacts, and probably forms a ternary complex, with MukE and MukF via its C-terminal region. The complex formation is stimulated by calcium or magnesium. Interacts with tubulin-related protein FtsZ.

It localises to the cytoplasm. Its subcellular location is the nucleoid. In terms of biological role, plays a central role in chromosome condensation, segregation and cell cycle progression. Functions as a homodimer, which is essential for chromosome partition. Involved in negative DNA supercoiling in vivo, and by this means organize and compact chromosomes. May achieve or facilitate chromosome segregation by condensation DNA from both sides of a centrally located replisome during cell division. The chain is Chromosome partition protein MukB from Escherichia coli O1:K1 / APEC.